We begin with the raw amino-acid sequence, 95 residues long: MLHTLSVSPWHADIAAMLRVMDHGDDLLLLSDGVTAAIAGGRFLEILQSAPITLYVLQDDVDARGLAGQIADSVGRVSYTDFVRLTVKHAGQLAW.

It belongs to the DsrH/TusB family. Heterohexamer, formed by a dimer of trimers. The hexameric TusBCD complex contains 2 copies each of TusB, TusC and TusD. The TusBCD complex interacts with TusE.

Its subcellular location is the cytoplasm. In terms of biological role, part of a sulfur-relay system required for 2-thiolation of 5-methylaminomethyl-2-thiouridine (mnm(5)s(2)U) at tRNA wobble positions. In Klebsiella pneumoniae (strain 342), this protein is Protein TusB.